Reading from the N-terminus, the 111-residue chain is MNAHKERLESNLLELLQEALSSLNDSELNSLSVTKVECSKGKHHAFVFVLSQDHKILSKLKKAEGLIRQFVLQASGWFKCPKLSFILDNSLEKQLRLDAIFNEIAKGKDDD.

Belongs to the RbfA family. As to quaternary structure, monomer. Binds 30S ribosomal subunits, but not 50S ribosomal subunits or 70S ribosomes.

It is found in the cytoplasm. In terms of biological role, one of several proteins that assist in the late maturation steps of the functional core of the 30S ribosomal subunit. Associates with free 30S ribosomal subunits (but not with 30S subunits that are part of 70S ribosomes or polysomes). Required for efficient processing of 16S rRNA. May interact with the 5'-terminal helix region of 16S rRNA. This Helicobacter acinonychis (strain Sheeba) protein is Ribosome-binding factor A.